A 637-amino-acid chain; its full sequence is Phosphomethylpyrimidine synthase (637 aa).

Substrate-binding positions include N242, M271, Y300, H336, 356–358, 397–400, and E436; these read SRG and DGLR. H440 lines the Zn(2+) pocket. Residue Y463 participates in substrate binding. H504 is a Zn(2+) binding site. The [4Fe-4S] cluster site is built by C584, C587, and C592.

The protein belongs to the ThiC family. In terms of assembly, homodimer. [4Fe-4S] cluster is required as a cofactor.

The enzyme catalyses 5-amino-1-(5-phospho-beta-D-ribosyl)imidazole + S-adenosyl-L-methionine = 4-amino-2-methyl-5-(phosphooxymethyl)pyrimidine + CO + 5'-deoxyadenosine + formate + L-methionine + 3 H(+). The protein operates within cofactor biosynthesis; thiamine diphosphate biosynthesis. Its function is as follows. Catalyzes the synthesis of the hydroxymethylpyrimidine phosphate (HMP-P) moiety of thiamine from aminoimidazole ribotide (AIR) in a radical S-adenosyl-L-methionine (SAM)-dependent reaction. The sequence is that of Phosphomethylpyrimidine synthase from Herminiimonas arsenicoxydans.